The following is a 279-amino-acid chain: Diaminopimelate epimerase (279 aa).

Residues N13 and N66 each coordinate substrate. The active-site Proton donor is the C75. Substrate-binding positions include 76–77 (GN), N164, N197, and 215–216 (ER). The active-site Proton acceptor is C224. 225–226 (GT) provides a ligand contact to substrate.

This sequence belongs to the diaminopimelate epimerase family. In terms of assembly, homodimer.

The protein resides in the cytoplasm. The catalysed reaction is (2S,6S)-2,6-diaminopimelate = meso-2,6-diaminopimelate. It participates in amino-acid biosynthesis; L-lysine biosynthesis via DAP pathway; DL-2,6-diaminopimelate from LL-2,6-diaminopimelate: step 1/1. Functionally, catalyzes the stereoinversion of LL-2,6-diaminopimelate (L,L-DAP) to meso-diaminopimelate (meso-DAP), a precursor of L-lysine and an essential component of the bacterial peptidoglycan. The sequence is that of Diaminopimelate epimerase from Brachyspira hyodysenteriae (strain ATCC 49526 / WA1).